The primary structure comprises 278 residues: Small ribosomal subunit protein uS2 (278 aa).

Residues 233-258 (IDMEAAGEAPANKGKKKSAKARLDKS) form a disordered region.

This sequence belongs to the universal ribosomal protein uS2 family.

In Bacteroides fragilis (strain ATCC 25285 / DSM 2151 / CCUG 4856 / JCM 11019 / LMG 10263 / NCTC 9343 / Onslow / VPI 2553 / EN-2), this protein is Small ribosomal subunit protein uS2.